Here is a 200-residue protein sequence, read N- to C-terminus: Recombination protein RecR (200 aa).

The C4-type zinc-finger motif lies at 58-75; sequence CSNCFCLKISQTSPCNFC. The Toprim domain maps to 82-177; sequence SSLCIVATPK…KISRLALGMP (96 aa).

The protein belongs to the RecR family.

May play a role in DNA repair. It seems to be involved in an RecBC-independent recombinational process of DNA repair. It may act with RecF and RecO. The sequence is that of Recombination protein RecR from Chlamydia trachomatis serovar D (strain ATCC VR-885 / DSM 19411 / UW-3/Cx).